The sequence spans 705 residues: Polyribonucleotide nucleotidyltransferase (705 aa).

Residues Asp-487 and Asp-493 each contribute to the Mg(2+) site. Positions 554–613 (PKILTMKINPDKIRDVIGPSGKQINKIIEDTGVKIDIEQDGTIFISSTEEDMNQKAKKII) constitute a KH domain. Positions 623-691 (GQLYLGKVKR…KQGRVNLSRK (69 aa)) constitute an S1 motif domain.

Belongs to the polyribonucleotide nucleotidyltransferase family. The cofactor is Mg(2+).

The protein localises to the cytoplasm. The catalysed reaction is RNA(n+1) + phosphate = RNA(n) + a ribonucleoside 5'-diphosphate. Its function is as follows. Involved in mRNA degradation. Catalyzes the phosphorolysis of single-stranded polyribonucleotides processively in the 3'- to 5'-direction. The protein is Polyribonucleotide nucleotidyltransferase of Bacillus pumilus (strain SAFR-032).